Reading from the N-terminus, the 288-residue chain is ATP synthase gamma chain (288 aa).

The protein belongs to the ATPase gamma chain family. In terms of assembly, F-type ATPases have 2 components, CF(1) - the catalytic core - and CF(0) - the membrane proton channel. CF(1) has five subunits: alpha(3), beta(3), gamma(1), delta(1), epsilon(1). CF(0) has three main subunits: a, b and c.

It is found in the cell inner membrane. Functionally, produces ATP from ADP in the presence of a proton gradient across the membrane. The gamma chain is believed to be important in regulating ATPase activity and the flow of protons through the CF(0) complex. The protein is ATP synthase gamma chain of Legionella pneumophila (strain Paris).